The sequence spans 230 residues: Probable endonuclease C19F8.04c (230 aa).

The helical transmembrane segment at A10–L27 threads the bilayer. The TNase-like domain occupies K55 to Q216. Residue R104 is part of the active site. Residue D109 coordinates Ca(2+). Catalysis depends on residues E112 and R152.

This sequence belongs to the LCL3 family.

It is found in the mitochondrion. The protein resides in the membrane. The protein is Probable endonuclease C19F8.04c of Schizosaccharomyces pombe (strain 972 / ATCC 24843) (Fission yeast).